We begin with the raw amino-acid sequence, 278 residues long: Envelope glycoprotein L (278 aa).

A signal peptide spans 1–30; it reads MCRRPDCGFSFSPGPVVLLWCCLLLPIVSS. Positions 43-256 constitute a gL betaherpesvirus-type domain; the sequence is VPAECPELTR…DKYYAGLPPE (214 aa). Cysteines 154 and 159 form a disulfide.

Belongs to the herpesviridae glycoprotein L (gL) family. Betaherpesvirinae gL subfamily. In terms of assembly, interacts with glycoprotein H (gH); this interaction is necessary for the correct processing and cell surface expression of gH. Forms the envelope pentamer complex (PC) composed of gH, gL, UL128, UL130, and UL131A. The pentamer interacts with host NRP2. Forms the envelope trimer complex composed of gH, gL, and gO. The trimer interacts with host PDGFRA.

It is found in the virion membrane. The protein resides in the host cell membrane. The protein localises to the host Golgi apparatus. Its subcellular location is the host trans-Golgi network. Its function is as follows. The heterodimer glycoprotein H-glycoprotein L is required for the fusion of viral and plasma membranes leading to virus entry into the host cell. Acts as a functional inhibitor of gH and maintains gH in an inhibited form. Upon binding to host integrins, gL dissociates from gH leading to activation of the viral fusion glycoproteins gB and gH. In human cytomegalovirus, forms two distincts complexes to mediate viral entry, a trimer and a pentamer at the surface of the virion envelope. The gH-gL-gO trimer is required for infection in fibroblasts by interacting with host PDGFRA. The gH-gL-UL128-UL130-UL131A pentamer is essential for viral entry in epithelial, endothelial and myeloid cells via interaction with host NRP2. The sequence is that of Envelope glycoprotein L from Human cytomegalovirus (strain AD169) (HHV-5).